Reading from the N-terminus, the 348-residue chain is Beta-hexosaminidase (348 aa).

Substrate is bound by residues Asp-62, Arg-70, Arg-134, and 164–165 (KH). His-177 functions as the Proton donor/acceptor in the catalytic mechanism. The active-site Nucleophile is the Asp-249.

It belongs to the glycosyl hydrolase 3 family. NagZ subfamily.

It is found in the cytoplasm. The catalysed reaction is Hydrolysis of terminal non-reducing N-acetyl-D-hexosamine residues in N-acetyl-beta-D-hexosaminides.. Its pathway is cell wall biogenesis; peptidoglycan recycling. Functionally, plays a role in peptidoglycan recycling by cleaving the terminal beta-1,4-linked N-acetylglucosamine (GlcNAc) from peptide-linked peptidoglycan fragments, giving rise to free GlcNAc, anhydro-N-acetylmuramic acid and anhydro-N-acetylmuramic acid-linked peptides. This is Beta-hexosaminidase from Histophilus somni (strain 2336) (Haemophilus somnus).